The sequence spans 417 residues: Gamma-glutamyl phosphate reductase (417 aa).

This sequence belongs to the gamma-glutamyl phosphate reductase family.

Its subcellular location is the cytoplasm. The catalysed reaction is L-glutamate 5-semialdehyde + phosphate + NADP(+) = L-glutamyl 5-phosphate + NADPH + H(+). Its pathway is amino-acid biosynthesis; L-proline biosynthesis; L-glutamate 5-semialdehyde from L-glutamate: step 2/2. Functionally, catalyzes the NADPH-dependent reduction of L-glutamate 5-phosphate into L-glutamate 5-semialdehyde and phosphate. The product spontaneously undergoes cyclization to form 1-pyrroline-5-carboxylate. This is Gamma-glutamyl phosphate reductase from Escherichia coli O7:K1 (strain IAI39 / ExPEC).